Reading from the N-terminus, the 332-residue chain is Lipoyl synthase (332 aa).

[4Fe-4S] cluster-binding residues include Cys74, Cys79, Cys85, Cys100, Cys104, Cys107, and Ser314. One can recognise a Radical SAM core domain in the interval 85–303 (CFGKGTATFM…EQEAYRMGFS (219 aa)).

Belongs to the radical SAM superfamily. Lipoyl synthase family. Requires [4Fe-4S] cluster as cofactor.

It is found in the cytoplasm. It catalyses the reaction [[Fe-S] cluster scaffold protein carrying a second [4Fe-4S](2+) cluster] + N(6)-octanoyl-L-lysyl-[protein] + 2 oxidized [2Fe-2S]-[ferredoxin] + 2 S-adenosyl-L-methionine + 4 H(+) = [[Fe-S] cluster scaffold protein] + N(6)-[(R)-dihydrolipoyl]-L-lysyl-[protein] + 4 Fe(3+) + 2 hydrogen sulfide + 2 5'-deoxyadenosine + 2 L-methionine + 2 reduced [2Fe-2S]-[ferredoxin]. The protein operates within protein modification; protein lipoylation via endogenous pathway; protein N(6)-(lipoyl)lysine from octanoyl-[acyl-carrier-protein]: step 2/2. Its function is as follows. Catalyzes the radical-mediated insertion of two sulfur atoms into the C-6 and C-8 positions of the octanoyl moiety bound to the lipoyl domains of lipoate-dependent enzymes, thereby converting the octanoylated domains into lipoylated derivatives. The sequence is that of Lipoyl synthase from Verminephrobacter eiseniae (strain EF01-2).